The sequence spans 146 residues: Hemoglobin subunit beta-1 (146 aa).

Residues 2 to 146 enclose the Globin domain; sequence EWTDKERAII…VVSALGKQYH (145 aa). Heme b-binding residues include His-63 and His-92.

This sequence belongs to the globin family. As to quaternary structure, hb 1 is a heterotetramer of two alpha-1 and two beta-1 chains. As to expression, red blood cells.

In terms of biological role, involved in oxygen transport from gills to the various peripheral tissues. The polypeptide is Hemoglobin subunit beta-1 (hbb1) (Gobionotothen gibberifrons (Humped rockcod)).